A 278-amino-acid chain; its full sequence is Indole-3-glycerol phosphate synthase (278 aa).

It belongs to the TrpC family.

It catalyses the reaction 1-(2-carboxyphenylamino)-1-deoxy-D-ribulose 5-phosphate + H(+) = (1S,2R)-1-C-(indol-3-yl)glycerol 3-phosphate + CO2 + H2O. Its pathway is amino-acid biosynthesis; L-tryptophan biosynthesis; L-tryptophan from chorismate: step 4/5. This Pseudomonas paraeruginosa (strain DSM 24068 / PA7) (Pseudomonas aeruginosa (strain PA7)) protein is Indole-3-glycerol phosphate synthase.